The primary structure comprises 541 residues: EH domain-containing protein 4 (541 aa).

Residue M1 is modified to N-acetylmethionine. The segment at 1–20 is disordered; that stretch reads MFSWMGRQAGGRERSGGMDA. A Phosphoserine modification is found at S15. A Dynamin-type G domain is found at 58 to 289; sequence FENKPMILLV…DLFRDIQSLP (232 aa). Residues 68–75 are G1 motif; sequence GQYSTGKT. Position 68-75 (68-75) interacts with ATP; sequence GQYSTGKT. The tract at residues 94–95 is G2 motif; sequence EP. The tract at residues 156–159 is G3 motif; that stretch reads DSPG. A Phosphoserine modification is found at S162. The interval 222–225 is G4 motif; the sequence is NKAD. ATP is bound at residue K223. Residue V246 is a region of interest, G5 motif. Residue W261 coordinates ATP. In terms of domain architecture, EH spans 447–535; sequence DKPVYDELFY…PHLVPPSHRK (89 aa). Y451 is modified (phosphotyrosine). Position 459 is a phosphoserine (S459). One can recognise an EF-hand domain in the interval 479 to 514; the sequence is LPNSVLGKIWKLADCDCDGMLDEEEFALAKHLIKIK. The Ca(2+) site is built by D492, D494, D496, M498, and E503.

The protein belongs to the TRAFAC class dynamin-like GTPase superfamily. Dynamin/Fzo/YdjA family. EHD subfamily. As to quaternary structure, homooligomer, and heterooligomer with EHD1, EHD2 and EHD3. Forms a complex with EHD4 and MICALL1; the complex controls CDH5 trafficking and coordinates angiogenesis.

It is found in the early endosome membrane. Its subcellular location is the recycling endosome membrane. The protein localises to the cell membrane. The protein resides in the cell junction. It localises to the adherens junction. ATP- and membrane-binding protein that probably controls membrane reorganization/tubulation upon ATP hydrolysis. Plays a role in early endosomal transport. During sprouting angiogenesis, in complex with PACSIN2 and MICALL1, forms recycling endosome-like tubular structure at asymmetric adherens junctions to control CDH5 trafficking. This chain is EH domain-containing protein 4, found in Mus musculus (Mouse).